The following is a 506-amino-acid chain: DEAD-box ATP-dependent RNA helicase CshA (506 aa).

The short motif at 2-30 (QNFKELGISDNTVQSLESMGFKEPTPIQK) is the Q motif element. In terms of domain architecture, Helicase ATP-binding spans 33–203 (IPYALQGIDI…QQFMKSPKII (171 aa)). ATP is bound at residue 46-53 (AQTGTGKT). Positions 150–153 (DEAD) match the DEAD box motif. A Helicase C-terminal domain is found at 214 to 375 (QIEEFYTIVK…LRPPHRKEVL (162 aa)). Residues 436–506 (EKPLSRKGRN…KGRTFADHQK (71 aa)) form a disordered region. Over residues 468-480 (KRSKGYSSKKKST) the composition is skewed to basic residues.

The protein belongs to the DEAD box helicase family. CshA subfamily. Oligomerizes, may be a member of the RNA degradosome.

Its subcellular location is the cytoplasm. It carries out the reaction ATP + H2O = ADP + phosphate + H(+). In terms of biological role, DEAD-box RNA helicase possibly involved in RNA degradation. Unwinds dsRNA in both 5'- and 3'-directions, has RNA-dependent ATPase activity. In Staphylococcus aureus (strain MW2), this protein is DEAD-box ATP-dependent RNA helicase CshA.